Here is a 117-residue protein sequence, read N- to C-terminus: Immunity protein BC_0921 (117 aa).

Probably interacts with cognate toxin BC_0920 but not with other non-cognate toxins. The interaction inhibits the toxic activity of BC_0920.

It localises to the cytoplasm. Functionally, immunity component of an LXG toxin-immunity module. Neutralizes the RNase activity of cognate toxin BC_0920. Probably does not have immunity protein activity on other toxins with the LXG domain. This Bacillus cereus (strain ATCC 14579 / DSM 31 / CCUG 7414 / JCM 2152 / NBRC 15305 / NCIMB 9373 / NCTC 2599 / NRRL B-3711) protein is Immunity protein BC_0921.